The chain runs to 362 residues: UDP-N-acetylglucosamine--N-acetylmuramyl-(pentapeptide) pyrophosphoryl-undecaprenol N-acetylglucosamine transferase (362 aa).

UDP-N-acetyl-alpha-D-glucosamine-binding positions include 15-17, Asn127, Arg165, Ser191, Ile247, 266-271, and Gln292; these read TGG and ALTVSE.

The protein belongs to the glycosyltransferase 28 family. MurG subfamily.

It is found in the cell inner membrane. The catalysed reaction is di-trans,octa-cis-undecaprenyl diphospho-N-acetyl-alpha-D-muramoyl-L-alanyl-D-glutamyl-meso-2,6-diaminopimeloyl-D-alanyl-D-alanine + UDP-N-acetyl-alpha-D-glucosamine = di-trans,octa-cis-undecaprenyl diphospho-[N-acetyl-alpha-D-glucosaminyl-(1-&gt;4)]-N-acetyl-alpha-D-muramoyl-L-alanyl-D-glutamyl-meso-2,6-diaminopimeloyl-D-alanyl-D-alanine + UDP + H(+). Its pathway is cell wall biogenesis; peptidoglycan biosynthesis. Functionally, cell wall formation. Catalyzes the transfer of a GlcNAc subunit on undecaprenyl-pyrophosphoryl-MurNAc-pentapeptide (lipid intermediate I) to form undecaprenyl-pyrophosphoryl-MurNAc-(pentapeptide)GlcNAc (lipid intermediate II). This is UDP-N-acetylglucosamine--N-acetylmuramyl-(pentapeptide) pyrophosphoryl-undecaprenol N-acetylglucosamine transferase from Shewanella sp. (strain MR-4).